The primary structure comprises 130 residues: Small ribosomal subunit protein uS9 (130 aa).

This sequence belongs to the universal ribosomal protein uS9 family.

In Desulfosudis oleivorans (strain DSM 6200 / JCM 39069 / Hxd3) (Desulfococcus oleovorans), this protein is Small ribosomal subunit protein uS9.